Consider the following 141-residue polypeptide: Putative pre-16S rRNA nuclease (141 aa).

It belongs to the YqgF nuclease family.

Its subcellular location is the cytoplasm. In terms of biological role, could be a nuclease involved in processing of the 5'-end of pre-16S rRNA. The protein is Putative pre-16S rRNA nuclease of Shewanella oneidensis (strain ATCC 700550 / JCM 31522 / CIP 106686 / LMG 19005 / NCIMB 14063 / MR-1).